We begin with the raw amino-acid sequence, 496 residues long: NAD(P)H-quinone oxidoreductase subunit 2, chloroplastic (496 aa).

The next 14 helical transmembrane spans lie at 14 to 34 (SFLP…LDLV), 42 to 62 (MLVK…IQQW), 79 to 99 (FTTC…PLSF), 109 to 129 (LTEF…LSSA), 133 to 153 (ITIF…TGYV), 167 to 187 (LIIG…LYGL), 210 to 230 (LASW…LSLV), 244 to 264 (PTPV…ALTI), 281 to 301 (ILQI…MVET), 305 to 325 (RILT…IVAG), 334 to 354 (LVYM…IILF), 377 to 397 (ASCL…TGFF), 400 to 420 (ILLF…TGIF), and 469 to 489 (IYLC…VIYF).

Belongs to the complex I subunit 2 family. As to quaternary structure, NDH is composed of at least 16 different subunits, 5 of which are encoded in the nucleus.

The protein localises to the plastid. Its subcellular location is the chloroplast thylakoid membrane. It catalyses the reaction a plastoquinone + NADH + (n+1) H(+)(in) = a plastoquinol + NAD(+) + n H(+)(out). The catalysed reaction is a plastoquinone + NADPH + (n+1) H(+)(in) = a plastoquinol + NADP(+) + n H(+)(out). Its function is as follows. NDH shuttles electrons from NAD(P)H:plastoquinone, via FMN and iron-sulfur (Fe-S) centers, to quinones in the photosynthetic chain and possibly in a chloroplast respiratory chain. The immediate electron acceptor for the enzyme in this species is believed to be plastoquinone. Couples the redox reaction to proton translocation, and thus conserves the redox energy in a proton gradient. The sequence is that of NAD(P)H-quinone oxidoreductase subunit 2, chloroplastic from Chara vulgaris (Common stonewort).